The sequence spans 323 residues: Tetraacyldisaccharide 4'-kinase (323 aa).

Position 56–63 (56–63 (TVGGVGKT)) interacts with ATP.

This sequence belongs to the LpxK family.

The enzyme catalyses a lipid A disaccharide + ATP = a lipid IVA + ADP + H(+). It functions in the pathway glycolipid biosynthesis; lipid IV(A) biosynthesis; lipid IV(A) from (3R)-3-hydroxytetradecanoyl-[acyl-carrier-protein] and UDP-N-acetyl-alpha-D-glucosamine: step 6/6. Functionally, transfers the gamma-phosphate of ATP to the 4'-position of a tetraacyldisaccharide 1-phosphate intermediate (termed DS-1-P) to form tetraacyldisaccharide 1,4'-bis-phosphate (lipid IVA). This Legionella pneumophila (strain Corby) protein is Tetraacyldisaccharide 4'-kinase.